Consider the following 178-residue polypeptide: Putative type II secretion system M-type protein YghD (178 aa).

The Cytoplasmic segment spans residues methionine 1–methionine 39. Residues leucine 40–leucine 60 traverse the membrane as a helical segment. Topologically, residues serine 61–glycine 178 are periplasmic.

The protein belongs to the GSP M family.

It is found in the cell inner membrane. Its function is as follows. Involved in a type II secretion system (T2SS, formerly general secretion pathway, GSP) for the export of folded proteins across the outer membrane. The sequence is that of Putative type II secretion system M-type protein YghD (yghD) from Escherichia coli (strain K12).